The sequence spans 410 residues: Peptidase T (410 aa).

Zn(2+) is bound at residue His79. The active site involves Asp81. Asp142 serves as a coordination point for Zn(2+). Glu176 acts as the Proton acceptor in catalysis. 3 residues coordinate Zn(2+): Glu177, Asp199, and His381.

It belongs to the peptidase M20B family. Requires Zn(2+) as cofactor.

The protein resides in the cytoplasm. It carries out the reaction Release of the N-terminal residue from a tripeptide.. In terms of biological role, cleaves the N-terminal amino acid of tripeptides. The chain is Peptidase T from Brevibacillus brevis (strain 47 / JCM 6285 / NBRC 100599).